The following is a 242-amino-acid chain: Orotidine 5'-phosphate decarboxylase (242 aa).

Substrate-binding positions include D21, K43, 71 to 80, T124, R185, Q195, G215, and R216; that span reads DLKFFDVPET. The Proton donor role is filled by K73.

Belongs to the OMP decarboxylase family. Type 1 subfamily. Homodimer.

The enzyme catalyses orotidine 5'-phosphate + H(+) = UMP + CO2. Its pathway is pyrimidine metabolism; UMP biosynthesis via de novo pathway; UMP from orotate: step 2/2. Functionally, catalyzes the decarboxylation of orotidine 5'-monophosphate (OMP) to uridine 5'-monophosphate (UMP). The chain is Orotidine 5'-phosphate decarboxylase from Methylococcus capsulatus (strain ATCC 33009 / NCIMB 11132 / Bath).